The following is a 127-amino-acid chain: Small ribosomal subunit protein uS13 (127 aa).

The interval 90–127 (RRHRQGLPVRGQRTRTNARTRRGRRVTVAGKKKAPSKK) is disordered. Residues 101 to 127 (QRTRTNARTRRGRRVTVAGKKKAPSKK) are compositionally biased toward basic residues.

Belongs to the universal ribosomal protein uS13 family. As to quaternary structure, part of the 30S ribosomal subunit. Forms a loose heterodimer with protein S19. Forms two bridges to the 50S subunit in the 70S ribosome.

Its function is as follows. Located at the top of the head of the 30S subunit, it contacts several helices of the 16S rRNA. In the 70S ribosome it contacts the 23S rRNA (bridge B1a) and protein L5 of the 50S subunit (bridge B1b), connecting the 2 subunits; these bridges are implicated in subunit movement. Contacts the tRNAs in the A and P-sites. This chain is Small ribosomal subunit protein uS13, found in Rippkaea orientalis (strain PCC 8801 / RF-1) (Cyanothece sp. (strain PCC 8801)).